Reading from the N-terminus, the 50-residue chain is Small ribosomal subunit protein uS14 (50 aa).

Residues cysteine 15, cysteine 18, cysteine 33, and cysteine 36 each coordinate Zn(2+).

This sequence belongs to the universal ribosomal protein uS14 family. Zinc-binding uS14 subfamily. Part of the 30S ribosomal subunit. Zn(2+) is required as a cofactor.

Binds 16S rRNA, required for the assembly of 30S particles. The chain is Small ribosomal subunit protein uS14 from Methanococcoides burtonii (strain DSM 6242 / NBRC 107633 / OCM 468 / ACE-M).